Consider the following 387-residue polypeptide: Probable inactive shikimate kinase like 2, chloroplastic (387 aa).

The transit peptide at Met-1 to Ser-71 directs the protein to the chloroplast. The segment at Asn-368–Thr-387 is disordered.

It belongs to the shikimate kinase family.

It localises to the plastid. It is found in the chloroplast. In Arabidopsis thaliana (Mouse-ear cress), this protein is Probable inactive shikimate kinase like 2, chloroplastic (SKL2).